The primary structure comprises 1453 residues: MIVLILCLLLFSYNSVICTSNNDCVQGNVTQLPGNENIIKDFLFHTFKEEPSVVVGGYYPTEVWYNCSRSATTTAYKDFSNIHAFYFDMEAMENSTGNARGKPLLVHVHGDPVSIIIYISAYRDDVQPRPLLKHGLLCITKNKIIDYNTFTSAQWSAICLGDDRKIPFSVIPTDNGTKIFGLEWNDDYVTAYISDRSHHLNINNNWFNNVTILYSRSSSATWQKSAAYVYQGVSNFTYYKLNNTNGLKSYELCEDYEYCTGYATNVFAPTVGGYIPHGFSFNNWFMRTNSSTFVSGRFVTNQPLLVNCLWPVPSFGVAAQQFCFEGAQFSQCNGVSLNNTVDVIRFNLNFTALVQSGMGATVFSLNTTGGVILEISCYNDTVSESSFYSYGEISFGVTDGPRYCFALYNGTALKYLGTLPPSVKEIAISKWGHFYINGYNFFSTFPIDCISFNLTTGDSGAFWTIAYTSYTDALVQVENTAIKKVTYCNSHINNIKCSQLTANLQNGFYPVASSEVGLVNKSVVLLPSFYSHTSVNITIDLGMKRSGYGQPIASTLSNITLPMQDNNTDVYCIRSNRFSVYFHSTCKSSLWDDVFNSDCTDVLYATAVIKTGTCPFSFDKLNNYLTFNKFCLSLNPVGANCKFDVAARTRTNEQVVRSLYVIYEEGDNIVGVPSDNSGLHDLSVLHLDSCTDYNIYGITGVGIIRQTNSTLLSGLYYTSLSGDLLGFKNVSDGVIYSVTPCDVSAHAAVIDGAIVGAMTSINSELLGLTHWTTTPNFYYYSIYNYTNERTRGTAIDSNDVDCEPIITYSNIGVCKNGALVFINVTHSDGDVQPISTGNVTIPTNFTISVQVEYIQVYTTPVSIDCSRYVCNGNPRCNKLLTQYVSACQTIEQALAMGARLENMEIDSMLFVSENALKLASVEAFNSTETLDPIYKEWPNIGGSWLGGLKDILPSHNSKRKYRSAIEDLLFDKVVTSGLGTVDEDYKRCTGGYDIADLVCAQYYNGIMVLPGVANDDKMAMYTASLAGGITLGSLGGGAVSIPFAIAVQARLNYVALQTDVLNKNQQILANAFNQAIGNITQAFGKVNDAIHQTSQGLATVAKVLAKVQDVVNTQGQALSHLTLQLQNNFQAISSSISDIYNRLDELSADAQVDRLITGRLTALNAFVSQTLTRQAEVRASRQLAKDKVNECVRSQSQRFGFCGNGTHLFSLANAAPNGMIFFHTVLLPTAYETVTAWSGICASDGDRTFGLVVKDVQLTLFRNLDDKFYLTPRTMYQPIVATSSDFVQIEGCDVLFVNATVIDLPSIIPDYIDINQTVQDILENFRPNWTVPELPLDIFNATYLNLTGEINDLEFRSEKLHNTTVELAILIDNINNTLVNLEWLNRIETYVKWPWYVWLLIGLVVIFCIPILLFCCCSTGCCGCIGCLGSCCHSICSRRQFESYEPIEKVHVH.

A signal peptide spans 1–31 (MIVLILCLLLFSYNSVICTSNNDCVQGNVTQ). S1 stretches follow at residues 19–791 (TSNN…ERTR) and 32–780 (LPGN…FYYY). Residues 32 to 1394 (LPGNENIIKD…NRIETYVKWP (1363 aa)) are Virion surface-facing. The segment at 661-805 (VIYEEGDNIV…DSNDVDCEPI (145 aa)) is interaction with host ANPEP. S2 stretches follow at residues 781-1453 (SIYN…VHVH) and 794-1453 (AIDS…VHVH). The tract at residues 1026 to 1047 (AGGITLGSLGGGAVSIPFAIAV) is fusion peptide. Positions 1041 to 1160 (IPFAIAVQAR…QVDRLITGRL (120 aa)) are heptad repeat 1 (HR1). Coiled-coil stretches lie at residues 1108 to 1152 (QDVV…DAQV) and 1342 to 1384 (TYLN…LEWL). Residues 1309 to 1406 (PDYIDINQTV…VWLLIGLVVI (98 aa)) are heptad repeat 2 (HR2). The chain crosses the membrane as a helical span at residues 1395 to 1414 (WYVWLLIGLVVIFCIPILLF). The Intravirion segment spans residues 1415-1453 (CCCSTGCCGCIGCLGSCCHSICSRRQFESYEPIEKVHVH). The short motif at 1449 to 1453 (KVHVH) is the KxHxx element.

This sequence belongs to the alphacoronaviruses spike protein family. As to quaternary structure, homotrimer. During virus morphogenesis, found in a complex with M and HE proteins. Interacts with host ANPEP.

The protein resides in the virion membrane. It is found in the host endoplasmic reticulum-Golgi intermediate compartment membrane. Its function is as follows. S1 region attaches the virion to the cell membrane by interacting with host ANPEP/aminopeptidase N, initiating the infection. Binding to the receptor probably induces conformational changes in the S glycoprotein unmasking the fusion peptide of S2 region and activating membranes fusion. S2 region belongs to the class I viral fusion protein. Under the current model, the protein has at least 3 conformational states: pre-fusion native state, pre-hairpin intermediate state, and post-fusion hairpin state. During viral and target cell membrane fusion, the coiled coil regions (heptad repeats) regions assume a trimer-of-hairpins structure, positioning the fusion peptide in close proximity to the C-terminal region of the ectodomain. The formation of this structure appears to drive apposition and subsequent fusion of viral and target cell membranes. The sequence is that of Spike glycoprotein from Canis lupus familiaris (Dog).